A 208-amino-acid polypeptide reads, in one-letter code: MKAIFITLEGPDGSGKTTVGTLLNQKMTEAGIDFIKTREPGGSPISEKVRNIVLGIGNEEMDPKTEVLLIAGARRQHVVETIRPALAAGKTVLCDRFMDSSLAYQGAGRDMNMEQVLQVNLYAIEDTLPDRTYYLDVPAEVGLARIAANKGREVNRLDKEDITYHEKVQAGYEKVINMFPERFMRVDATKTPEEITETILADILRQLA.

Residue 10-17 (GPDGSGKT) participates in ATP binding.

The protein belongs to the thymidylate kinase family.

It carries out the reaction dTMP + ATP = dTDP + ADP. Functionally, phosphorylation of dTMP to form dTDP in both de novo and salvage pathways of dTTP synthesis. The protein is Thymidylate kinase of Listeria monocytogenes serotype 4b (strain CLIP80459).